The following is a 317-amino-acid chain: Transaldolase (317 aa).

Lys132 acts as the Schiff-base intermediate with substrate in catalysis.

Belongs to the transaldolase family. Type 1 subfamily. Homodimer.

Its subcellular location is the cytoplasm. The catalysed reaction is D-sedoheptulose 7-phosphate + D-glyceraldehyde 3-phosphate = D-erythrose 4-phosphate + beta-D-fructose 6-phosphate. Its pathway is carbohydrate degradation; pentose phosphate pathway; D-glyceraldehyde 3-phosphate and beta-D-fructose 6-phosphate from D-ribose 5-phosphate and D-xylulose 5-phosphate (non-oxidative stage): step 2/3. Its function is as follows. Transaldolase is important for the balance of metabolites in the pentose-phosphate pathway. This Haemophilus influenzae (strain PittEE) protein is Transaldolase.